A 452-amino-acid polypeptide reads, in one-letter code: Adenylosuccinate synthetase isozyme 1 (452 aa).

The tract at residues 1-22 is disordered; it reads MSGTRASNDRSSHPGGHKRPRY. GTP contacts are provided by residues 37-43 and 65-67; these read GDEGKGK and GHT. Aspartate 38 (proton acceptor) is an active-site residue. Residues aspartate 38 and glycine 65 each contribute to the Mg(2+) site. Aspartate 38 is a substrate binding site. IMP is bound by residues 38-41, 63-66, threonine 158, arginine 172, asparagine 251, threonine 266, and arginine 330; these read DEGK and NAGH. Histidine 66 (proton donor) is an active-site residue. 326 to 332 lines the substrate pocket; that stretch reads VTTGRKR. GTP-binding positions include arginine 332, 358–360, and 440–443; these read KLD and GVGK.

Belongs to the adenylosuccinate synthetase family. Homodimer. Mg(2+) is required as a cofactor.

It localises to the cytoplasm. The enzyme catalyses IMP + L-aspartate + GTP = N(6)-(1,2-dicarboxyethyl)-AMP + GDP + phosphate + 2 H(+). It participates in purine metabolism; AMP biosynthesis via de novo pathway; AMP from IMP: step 1/2. Component of the purine nucleotide cycle (PNC), which interconverts IMP and AMP to regulate the nucleotide levels in various tissues, and which contributes to glycolysis and ammoniagenesis. Catalyzes the first committed step in the biosynthesis of AMP from IMP. The sequence is that of Adenylosuccinate synthetase isozyme 1 (adss1) from Xenopus tropicalis (Western clawed frog).